Consider the following 292-residue polypeptide: MEGIPLIDIYGKQWKIDKLIGCGGFGCVYSTQCASNTRQAVIKVESLNNTTMVSEVLVYNNIYDKNRIALWKNYKNIDHLGIPMYYGCGSFKRNTMYYRFILLERLVENTKELLKRVKKPKPLIKNIMKDMLYTLEYIHEHGISHGDIKPENIMVDGRYRSYLIDYGIVSYFIVNGKHVKYYKESKNWHRGTLYYASLDAHNGTCVTRRGDLESLGYCMLKWAGIPLPWKVFGNNGNMVHVAKCDFIKRVHKNKVNIKSANKGIYDYIKCVTKLSYEEKPDYDLLRQLVNSL.

In terms of domain architecture, Protein kinase spans 14–292; sequence WKIDKLIGCG…DLLRQLVNSL (279 aa). ATP is bound by residues 20–28 and Lys-43; that span reads IGCGGFGCV. The active-site Proton acceptor is Asp-147.

The protein belongs to the protein kinase superfamily. Ser/Thr protein kinase family. Poxviruses subfamily.

The catalysed reaction is L-seryl-[protein] + ATP = O-phospho-L-seryl-[protein] + ADP + H(+). It catalyses the reaction L-threonyl-[protein] + ATP = O-phospho-L-threonyl-[protein] + ADP + H(+). This is Probable serine/threonine-protein kinase FPV226 from Vertebrata (FPV).